We begin with the raw amino-acid sequence, 305 residues long: Lipoyl synthase (305 aa).

Residues Cys41, Cys46, Cys52, Cys68, Cys72, Cys75, and Ser281 each contribute to the [4Fe-4S] cluster site. A Radical SAM core domain is found at 54-270; sequence GARRTATFMI…RKVAMDKGFK (217 aa). The span at 283–298 shows a compositional bias: basic and acidic residues; that stretch reads HADEQVNEAAKEKQRQ. The interval 283–305 is disordered; sequence HADEQVNEAAKEKQRQGEAQLNS.

It belongs to the radical SAM superfamily. Lipoyl synthase family. Requires [4Fe-4S] cluster as cofactor.

The protein localises to the cytoplasm. It catalyses the reaction [[Fe-S] cluster scaffold protein carrying a second [4Fe-4S](2+) cluster] + N(6)-octanoyl-L-lysyl-[protein] + 2 oxidized [2Fe-2S]-[ferredoxin] + 2 S-adenosyl-L-methionine + 4 H(+) = [[Fe-S] cluster scaffold protein] + N(6)-[(R)-dihydrolipoyl]-L-lysyl-[protein] + 4 Fe(3+) + 2 hydrogen sulfide + 2 5'-deoxyadenosine + 2 L-methionine + 2 reduced [2Fe-2S]-[ferredoxin]. It functions in the pathway protein modification; protein lipoylation via endogenous pathway; protein N(6)-(lipoyl)lysine from octanoyl-[acyl-carrier-protein]. Its function is as follows. Catalyzes the radical-mediated insertion of two sulfur atoms into the C-6 and C-8 positions of the octanoyl moiety bound to the lipoyl domains of lipoate-dependent enzymes, thereby converting the octanoylated domains into lipoylated derivatives. The chain is Lipoyl synthase from Staphylococcus aureus (strain bovine RF122 / ET3-1).